A 464-amino-acid polypeptide reads, in one-letter code: JmjC domain-containing protein 1 (464 aa).

Positions 182–349 (LYAKDMHLFR…QMYTALKEQY (168 aa)) constitute a JmjC domain.

This chain is JmjC domain-containing protein 1 (jmj1), found in Schizosaccharomyces pombe (strain 972 / ATCC 24843) (Fission yeast).